The sequence spans 275 residues: Phosphonoacetaldehyde hydrolase (275 aa).

Aspartate 15 serves as the catalytic Nucleophile. 2 residues coordinate Mg(2+): aspartate 15 and alanine 17. Lysine 56 (schiff-base intermediate with substrate) is an active-site residue. Aspartate 189 contacts Mg(2+).

The protein belongs to the HAD-like hydrolase superfamily. PhnX family. In terms of assembly, homodimer. Mg(2+) is required as a cofactor.

It carries out the reaction phosphonoacetaldehyde + H2O = acetaldehyde + phosphate + H(+). In terms of biological role, involved in phosphonate degradation. The protein is Phosphonoacetaldehyde hydrolase of Pseudomonas putida (strain ATCC 700007 / DSM 6899 / JCM 31910 / BCRC 17059 / LMG 24140 / F1).